Reading from the N-terminus, the 431-residue chain is Adenylosuccinate synthetase (431 aa).

GTP contacts are provided by residues 13–19 and 41–43; these read GDEGKGK and GHT. Aspartate 14 acts as the Proton acceptor in catalysis. Residues aspartate 14 and glycine 41 each coordinate Mg(2+). Residues 14–17, 39–42, threonine 130, arginine 144, glutamine 225, threonine 240, and arginine 304 each bind IMP; these read DEGK and NAGH. Residue histidine 42 is the Proton donor of the active site. 300–306 is a binding site for substrate; it reads ATTGRKR. GTP is bound by residues arginine 306, 332 to 334, and 415 to 417; these read KLD and STG.

The protein belongs to the adenylosuccinate synthetase family. Homodimer. Mg(2+) serves as cofactor.

The protein localises to the cytoplasm. The catalysed reaction is IMP + L-aspartate + GTP = N(6)-(1,2-dicarboxyethyl)-AMP + GDP + phosphate + 2 H(+). The protein operates within purine metabolism; AMP biosynthesis via de novo pathway; AMP from IMP: step 1/2. Plays an important role in the de novo pathway of purine nucleotide biosynthesis. Catalyzes the first committed step in the biosynthesis of AMP from IMP. In Shewanella denitrificans (strain OS217 / ATCC BAA-1090 / DSM 15013), this protein is Adenylosuccinate synthetase.